The chain runs to 343 residues: Glyceraldehyde-3-phosphate dehydrogenase (343 aa).

Residues 12–13 (SI) and G114 contribute to the NAD(+) site. Position 143–145 (143–145 (SCN)) interacts with D-glyceraldehyde 3-phosphate. Catalysis depends on C144, which acts as the Nucleophile. An NAD(+)-binding site is contributed by R172. 198 to 199 (HG) lines the D-glyceraldehyde 3-phosphate pocket. Residue Q307 participates in NAD(+) binding.

The protein belongs to the glyceraldehyde-3-phosphate dehydrogenase family. As to quaternary structure, homotetramer.

Its subcellular location is the cytoplasm. It carries out the reaction D-glyceraldehyde 3-phosphate + phosphate + NADP(+) = (2R)-3-phospho-glyceroyl phosphate + NADPH + H(+). The catalysed reaction is D-glyceraldehyde 3-phosphate + phosphate + NAD(+) = (2R)-3-phospho-glyceroyl phosphate + NADH + H(+). Its pathway is carbohydrate degradation; glycolysis; pyruvate from D-glyceraldehyde 3-phosphate: step 1/5. This Methanocaldococcus jannaschii (strain ATCC 43067 / DSM 2661 / JAL-1 / JCM 10045 / NBRC 100440) (Methanococcus jannaschii) protein is Glyceraldehyde-3-phosphate dehydrogenase (gap).